The following is a 376-amino-acid chain: Queuine tRNA-ribosyltransferase (376 aa).

D93 (proton acceptor) is an active-site residue. Residues 93–97, D147, Q190, and G217 each bind substrate; that span reads DSGGF. The interval 248-254 is RNA binding; that stretch reads GVGKPDD. D267 (nucleophile) is an active-site residue. Residues C305, C307, C310, and H336 each coordinate Zn(2+).

This sequence belongs to the queuine tRNA-ribosyltransferase family. Homodimer. Within each dimer, one monomer is responsible for RNA recognition and catalysis, while the other monomer binds to the replacement base PreQ1. Zn(2+) is required as a cofactor.

The enzyme catalyses 7-aminomethyl-7-carbaguanine + guanosine(34) in tRNA = 7-aminomethyl-7-carbaguanosine(34) in tRNA + guanine. Its pathway is tRNA modification; tRNA-queuosine biosynthesis. Its function is as follows. Catalyzes the base-exchange of a guanine (G) residue with the queuine precursor 7-aminomethyl-7-deazaguanine (PreQ1) at position 34 (anticodon wobble position) in tRNAs with GU(N) anticodons (tRNA-Asp, -Asn, -His and -Tyr). Catalysis occurs through a double-displacement mechanism. The nucleophile active site attacks the C1' of nucleotide 34 to detach the guanine base from the RNA, forming a covalent enzyme-RNA intermediate. The proton acceptor active site deprotonates the incoming PreQ1, allowing a nucleophilic attack on the C1' of the ribose to form the product. After dissociation, two additional enzymatic reactions on the tRNA convert PreQ1 to queuine (Q), resulting in the hypermodified nucleoside queuosine (7-(((4,5-cis-dihydroxy-2-cyclopenten-1-yl)amino)methyl)-7-deazaguanosine). This Ruegeria pomeroyi (strain ATCC 700808 / DSM 15171 / DSS-3) (Silicibacter pomeroyi) protein is Queuine tRNA-ribosyltransferase.